The chain runs to 510 residues: Probable cytosol aminopeptidase (510 aa).

Mn(2+) contacts are provided by Lys268 and Asp273. The active site involves Lys280. 3 residues coordinate Mn(2+): Asp291, Asp350, and Glu352. The active site involves Arg354.

This sequence belongs to the peptidase M17 family. Mn(2+) serves as cofactor.

It localises to the cytoplasm. It carries out the reaction Release of an N-terminal amino acid, Xaa-|-Yaa-, in which Xaa is preferably Leu, but may be other amino acids including Pro although not Arg or Lys, and Yaa may be Pro. Amino acid amides and methyl esters are also readily hydrolyzed, but rates on arylamides are exceedingly low.. It catalyses the reaction Release of an N-terminal amino acid, preferentially leucine, but not glutamic or aspartic acids.. Its function is as follows. Presumably involved in the processing and regular turnover of intracellular proteins. Catalyzes the removal of unsubstituted N-terminal amino acids from various peptides. This is Probable cytosol aminopeptidase from Micrococcus luteus (strain ATCC 4698 / DSM 20030 / JCM 1464 / CCM 169 / CCUG 5858 / IAM 1056 / NBRC 3333 / NCIMB 9278 / NCTC 2665 / VKM Ac-2230) (Micrococcus lysodeikticus).